The following is a 69-amino-acid chain: Cytochrome c oxidase copper chaperone (69 aa).

Cu cation is bound by residues Cys-23 and Cys-24. The CHCH domain maps to 23 to 65 (CCVCKPEKEERDTCILFNGQDSEKCKEFIEKYKECMKGYGFEV). Short sequence motifs (cx9C motif) lie at residues 26-36 (CKPEKEERDTC) and 47-57 (CKEFIEKYKEC). 2 disulfide bridges follow: Cys-26/Cys-57 and Cys-36/Cys-47.

Belongs to the COX17 family.

It localises to the mitochondrion intermembrane space. In terms of biological role, copper chaperone for cytochrome c oxidase (COX). Binds two copper ions and deliver them to the Cu(A) site of COX. The chain is Cytochrome c oxidase copper chaperone (COX17) from Saccharomyces cerevisiae (strain ATCC 204508 / S288c) (Baker's yeast).